A 182-amino-acid polypeptide reads, in one-letter code: Ribosome-recycling factor (182 aa).

Positions 136 to 160 (VKKSEKDGDLSEDQSRDEQETIQKE) are disordered.

The protein belongs to the RRF family.

It is found in the cytoplasm. Responsible for the release of ribosomes from messenger RNA at the termination of protein biosynthesis. May increase the efficiency of translation by recycling ribosomes from one round of translation to another. The sequence is that of Ribosome-recycling factor from Prochlorococcus marinus (strain NATL2A).